The chain runs to 198 residues: dITP/XTP pyrophosphatase (198 aa).

9–14 (SNNAKK) provides a ligand contact to substrate. Mg(2+) is bound by residues aspartate 41 and aspartate 70. Aspartate 70 (proton acceptor) is an active-site residue. Residues serine 71, 153–156 (FGYD), lysine 176, and 181–182 (HR) contribute to the substrate site.

This sequence belongs to the HAM1 NTPase family. As to quaternary structure, homodimer. It depends on Mg(2+) as a cofactor.

It carries out the reaction XTP + H2O = XMP + diphosphate + H(+). The enzyme catalyses dITP + H2O = dIMP + diphosphate + H(+). The catalysed reaction is ITP + H2O = IMP + diphosphate + H(+). Functionally, pyrophosphatase that catalyzes the hydrolysis of nucleoside triphosphates to their monophosphate derivatives, with a high preference for the non-canonical purine nucleotides XTP (xanthosine triphosphate), dITP (deoxyinosine triphosphate) and ITP. Seems to function as a house-cleaning enzyme that removes non-canonical purine nucleotides from the nucleotide pool, thus preventing their incorporation into DNA/RNA and avoiding chromosomal lesions. This Aromatoleum aromaticum (strain DSM 19018 / LMG 30748 / EbN1) (Azoarcus sp. (strain EbN1)) protein is dITP/XTP pyrophosphatase.